The primary structure comprises 759 residues: Phosphoribosylformylglycinamidine synthase subunit PurL (759 aa).

His48 is an active-site residue. Residues Tyr51 and Lys91 each coordinate ATP. Glu93 provides a ligand contact to Mg(2+). Substrate contacts are provided by residues 94-97 (SHNH) and Arg116. His95 functions as the Proton acceptor in the catalytic mechanism. A Mg(2+)-binding site is contributed by Asp117. Residue Gln240 participates in substrate binding. Asp268 provides a ligand contact to Mg(2+). 317–319 (ESQ) is a binding site for substrate. Positions 501 and 538 each coordinate ATP. Asn539 provides a ligand contact to Mg(2+). A substrate-binding site is contributed by Ser541.

This sequence belongs to the FGAMS family. As to quaternary structure, monomer. Part of the FGAM synthase complex composed of 1 PurL, 1 PurQ and 2 PurS subunits.

The protein localises to the cytoplasm. It carries out the reaction N(2)-formyl-N(1)-(5-phospho-beta-D-ribosyl)glycinamide + L-glutamine + ATP + H2O = 2-formamido-N(1)-(5-O-phospho-beta-D-ribosyl)acetamidine + L-glutamate + ADP + phosphate + H(+). The protein operates within purine metabolism; IMP biosynthesis via de novo pathway; 5-amino-1-(5-phospho-D-ribosyl)imidazole from N(2)-formyl-N(1)-(5-phospho-D-ribosyl)glycinamide: step 1/2. Functionally, part of the phosphoribosylformylglycinamidine synthase complex involved in the purines biosynthetic pathway. Catalyzes the ATP-dependent conversion of formylglycinamide ribonucleotide (FGAR) and glutamine to yield formylglycinamidine ribonucleotide (FGAM) and glutamate. The FGAM synthase complex is composed of three subunits. PurQ produces an ammonia molecule by converting glutamine to glutamate. PurL transfers the ammonia molecule to FGAR to form FGAM in an ATP-dependent manner. PurS interacts with PurQ and PurL and is thought to assist in the transfer of the ammonia molecule from PurQ to PurL. The polypeptide is Phosphoribosylformylglycinamidine synthase subunit PurL (Chlorobaculum tepidum (strain ATCC 49652 / DSM 12025 / NBRC 103806 / TLS) (Chlorobium tepidum)).